Here is a 139-residue protein sequence, read N- to C-terminus: Small ribosomal subunit protein bS6 (139 aa).

It belongs to the bacterial ribosomal protein bS6 family.

In terms of biological role, binds together with bS18 to 16S ribosomal RNA. The protein is Small ribosomal subunit protein bS6 of Borreliella afzelii (strain PKo) (Borrelia afzelii).